A 394-amino-acid polypeptide reads, in one-letter code: Cytochrome b561 and DOMON domain-containing protein At4g12980 (394 aa).

The first 24 residues, M1–S24, serve as a signal peptide directing secretion. The DOMON domain maps to L49–G169. The Cytochrome b561 domain maps to G184–L381. Helical transmembrane passes span I220–A240 and A252–W272. Positions 221, 257, and 290 each coordinate heme b. A helical transmembrane segment spans residues N292–P312. H326 lines the heme b pocket. Helical transmembrane passes span G328 to L348 and V361 to L381.

The cofactor is heme b.

It localises to the membrane. In terms of biological role, may act as a catecholamine-responsive trans-membrane electron transporter. The polypeptide is Cytochrome b561 and DOMON domain-containing protein At4g12980 (Arabidopsis thaliana (Mouse-ear cress)).